The chain runs to 395 residues: Phosphoglycerate kinase (395 aa).

Substrate is bound by residues Asp-21–Asn-23, Arg-36, His-59–Arg-62, Arg-113, and Arg-146. Residues Lys-197, Glu-324, and Gly-350 to Thr-353 contribute to the ATP site.

The protein belongs to the phosphoglycerate kinase family. In terms of assembly, monomer.

The protein resides in the cytoplasm. It catalyses the reaction (2R)-3-phosphoglycerate + ATP = (2R)-3-phospho-glyceroyl phosphate + ADP. It participates in carbohydrate degradation; glycolysis; pyruvate from D-glyceraldehyde 3-phosphate: step 2/5. This is Phosphoglycerate kinase from Acinetobacter baumannii (strain AB307-0294).